A 50-amino-acid polypeptide reads, in one-letter code: Protein PsbN (50 aa).

Residues 14–34 (VAVTILAVLLALTGFGLWTAF) traverse the membrane as a helical segment.

Belongs to the PsbN family.

Its subcellular location is the cellular thylakoid membrane. In terms of biological role, may play a role in photosystem I and II biogenesis. The sequence is that of Protein PsbN from Prochlorococcus marinus (strain MIT 9515).